A 332-amino-acid polypeptide reads, in one-letter code: MTKQDQRAERHIPVLLQPVLAGLMPLVGAKVIDGTFGAGGYTRALLKAGAQVIALDRDPHAIAAGQSLVDEFFPRLRLVHMEFSQLDRVVEEKVDAVILDIGVSSMQLDEAERGFSFQKDGPLDMRMAQTGFSASDVVNHLKAKDLARIFKILGEERYAGRIARMIEKRRAVQPFLRTGDLAYAIEALVGRKPGDRIHPATRVFQALRIYVNDEIGELARGLFAAERVLKAGGRLGVVSFHSLEDRMVKRFFVSRSGEGMRSRHLPEIKHSPATFFPLFKGGITANKEELQQNPRSRSARLRMGVRTNAEALAEDMKLFGLAEIASFEGGKK.

Residues 39-41 (GGY), Asp-56, Phe-83, Asp-100, and Gln-107 contribute to the S-adenosyl-L-methionine site.

Belongs to the methyltransferase superfamily. RsmH family.

The protein localises to the cytoplasm. It carries out the reaction cytidine(1402) in 16S rRNA + S-adenosyl-L-methionine = N(4)-methylcytidine(1402) in 16S rRNA + S-adenosyl-L-homocysteine + H(+). Specifically methylates the N4 position of cytidine in position 1402 (C1402) of 16S rRNA. The polypeptide is Ribosomal RNA small subunit methyltransferase H (Bartonella tribocorum (strain CIP 105476 / IBS 506)).